The primary structure comprises 241 residues: MKSLYALIFLLFVIVVSYIFNGLWSVFNIKHVFWVNLFLLIAFHPQHLDGLIILLLIPLKIFSNFKLKLQCIIALVGILLTIIKGVIKSGFGWILRILFFFVRMMTVSFINLVVFSILLTSVYVLGYVAFLKPDDIQFGTLYTAFGGLALLGAGIKIIQHFIKQSEEIAQEEFKKWYETEVKNFMYSLFITAKNAFPKFLDDLLAKGVVSQEEYQNLIKLYSHILARILKNDEEKMKIPTF.

The next 5 helical transmembrane spans lie at 7–27, 37–57, 72–92, 110–130, and 138–158; these read LIFL…WSVF, LFLL…LLLI, IIAL…SGFG, INLV…YVAF, and FGTL…IKII.

The protein resides in the cell membrane. This is an uncharacterized protein from Methanocaldococcus jannaschii (strain ATCC 43067 / DSM 2661 / JAL-1 / JCM 10045 / NBRC 100440) (Methanococcus jannaschii).